We begin with the raw amino-acid sequence, 340 residues long: Fructoselysine 6-phosphate deglycase (340 aa).

SIS domains lie at 35 to 169 (IVEE…RLAP) and 201 to 331 (LGEL…PDER).

As to quaternary structure, homododecamer.

The catalysed reaction is N(6)-(6-phospho-D-fructosyl)-L-lysine + H2O = D-glucose 6-phosphate + L-lysine. It functions in the pathway carbohydrate metabolism; fructoselysine degradation; D-glucose 6-phosphate and lysine from fructoselysine: step 2/2. With respect to regulation, strongly inhibited by ZnCl(2). Functionally, catalyzes the reversible conversion of fructoselysine 6-phosphate to glucose 6-phosphate and lysine. Functions in a fructoselysine degradation pathway that allows E.coli to grow on fructoselysine or psicoselysine. The chain is Fructoselysine 6-phosphate deglycase from Escherichia coli (strain K12).